The primary structure comprises 248 residues: 14-3-3-like protein 2 (248 aa).

This sequence belongs to the 14-3-3 family. Interacts with daf-16. Interacts with sir-2.1. Interacts with hcf-1.

Its subcellular location is the cytoplasm. It localises to the nucleus. Its function is as follows. Required for extension of lifespan by sir-2.1. Required to modulate lifespan, in concert with hcf-1, acting redundantly with 14-3-3-like protein par-5. Promotes nuclear export of yap-1. Negatively regulates the transcriptional activity of daf-16 by sequestering it to the cytoplasm. This is 14-3-3-like protein 2 from Caenorhabditis elegans.